We begin with the raw amino-acid sequence, 592 residues long: MEEFDSKDISTSKDEDCVPLGGECHEDDINELVKEDEVDGEEETQKTKGTKRKAESILARKRKQGRLSLDQEEEEDASRESGGRIIEKEDAAAEQEKGAESEDARQEEADVLASSVSDAEPKSELPPSTQTKTGEETEETSSSNLVKVEELEKPKKAEEVKLTKSPLAGEEVRFLTQQGRLSGRTSEDEPRRSEGVQHATGEERRADTNTSSKNEAAGQKWKGQSAVDVSGDESKLRCCKEEYCIGTWNVRSMNPGKLDVVKQEMERINIDILGISELKWTGMGELNSDDHYIYYCGQQSLRRNGVALIVNKRVRNAIIGCNLKNDRMISVRFQGKPFNLTVIQVYAPTPYAEEGEVYRFYEDLQHLLEITPKIDVLFIIGDWNAKVGSQEIPGITGRFGLGMQNEAGRRLIEFCHHNRLVITNTLFQQPSRRLYTWTSPDGRYRDQIDYIICRQRWRSSVQSAKTRPGADCGSDHKLLIAKFRLKLKIIPKTTRPFRVTNEEDATNEEAKSVLKQNEKEKPEANVPSTVSSVPGGSGMTKEVGETSQEAKSVFKQDEKDKPQANVPSSVPSLPAGSGPEKCDLEKKKDCNN.

Over residues 1–16 (MEEFDSKDISTSKDED) the composition is skewed to basic and acidic residues. 2 disordered regions span residues 1 to 225 (MEEF…KGQS) and 499 to 592 (VTNE…DCNN). A compositionally biased stretch (acidic residues) spans 25-42 (HEDDINELVKEDEVDGEE). Basic and acidic residues-rich tracts occupy residues 78–108 (SRES…RQEE) and 147–162 (KVEE…EVKL). Positions 175–184 (LTQQGRLSGR) are enriched in polar residues. 4 stretches are compositionally biased toward basic and acidic residues: residues 185–207 (TSED…RRAD), 508–523 (EEAK…EKPE), 552–562 (SVFKQDEKDKP), and 580–592 (EKCD…DCNN). A hydrophilic region spans residues 499–578 (VTNEEDATNE…SVPSLPAGSG (80 aa)).

In terms of processing, phosphorylated by CK2 (casein kinase II) in vitro. Expressed in liver and lung with higher expression in brain.

The protein localises to the cytoplasm. The protein resides in the nucleus. This is Craniofacial development protein 2 (CFDP2) from Bos taurus (Bovine).